Consider the following 76-residue polypeptide: Putative UPF0377 protein YGL260W (76 aa).

This sequence belongs to the UPF0377 family.

This is Putative UPF0377 protein YGL260W from Saccharomyces cerevisiae (strain ATCC 204508 / S288c) (Baker's yeast).